The following is a 711-amino-acid chain: Ribosomal RNA large subunit methyltransferase K/L (711 aa).

The region spanning 43–154 (TLYRTLLWSR…RENLVISLDL (112 aa)) is the THUMP domain.

This sequence belongs to the methyltransferase superfamily. RlmKL family.

The protein localises to the cytoplasm. It catalyses the reaction guanosine(2445) in 23S rRNA + S-adenosyl-L-methionine = N(2)-methylguanosine(2445) in 23S rRNA + S-adenosyl-L-homocysteine + H(+). The catalysed reaction is guanosine(2069) in 23S rRNA + S-adenosyl-L-methionine = N(2)-methylguanosine(2069) in 23S rRNA + S-adenosyl-L-homocysteine + H(+). Functionally, specifically methylates the guanine in position 2445 (m2G2445) and the guanine in position 2069 (m7G2069) of 23S rRNA. The polypeptide is Ribosomal RNA large subunit methyltransferase K/L (Haemophilus influenzae (strain PittEE)).